A 478-amino-acid chain; its full sequence is Capsid vertex component 1 (478 aa).

The tract at residues 131 to 184 (PRGPESEGEGGKDGGAGRGDGEASRESPLERIAAEASGPGPGSGRGRSAGGRRA) is disordered. A compositionally biased stretch (basic and acidic residues) spans 149-163 (GDGEASRESPLERIA). Residues 169-179 (PGPGSGRGRSA) show a composition bias toward gly residues.

This sequence belongs to the herpesviridae CVC1 protein family. As to quaternary structure, interacts (via C-terminus) with capsid vertex component 2/CVC2.

It is found in the virion. Its subcellular location is the host nucleus. Its function is as follows. Capsid vertex-specific component that plays a role during viral DNA encapsidation, assuring correct genome cleavage and presumably stabilizing capsids that contain full-length viral genomes. This chain is Capsid vertex component 1, found in Equus caballus (Horse).